The primary structure comprises 363 residues: Phospho-N-acetylmuramoyl-pentapeptide-transferase (363 aa).

The next 10 helical transmembrane spans lie at S27–A47, T76–L96, T97–A117, L137–P157, V171–G191, G202–V222, L242–P262, A265–V285, V292–F312, and K340–L360.

It belongs to the glycosyltransferase 4 family. MraY subfamily. Mg(2+) serves as cofactor.

Its subcellular location is the cell inner membrane. It catalyses the reaction UDP-N-acetyl-alpha-D-muramoyl-L-alanyl-gamma-D-glutamyl-meso-2,6-diaminopimeloyl-D-alanyl-D-alanine + di-trans,octa-cis-undecaprenyl phosphate = di-trans,octa-cis-undecaprenyl diphospho-N-acetyl-alpha-D-muramoyl-L-alanyl-D-glutamyl-meso-2,6-diaminopimeloyl-D-alanyl-D-alanine + UMP. It participates in cell wall biogenesis; peptidoglycan biosynthesis. Its function is as follows. Catalyzes the initial step of the lipid cycle reactions in the biosynthesis of the cell wall peptidoglycan: transfers peptidoglycan precursor phospho-MurNAc-pentapeptide from UDP-MurNAc-pentapeptide onto the lipid carrier undecaprenyl phosphate, yielding undecaprenyl-pyrophosphoryl-MurNAc-pentapeptide, known as lipid I. This Gluconobacter oxydans (strain 621H) (Gluconobacter suboxydans) protein is Phospho-N-acetylmuramoyl-pentapeptide-transferase.